The sequence spans 227 residues: Ribonuclease 3 (227 aa).

Residues 6–128 (ASDYQQRIGY…VIAAIYLDAD (123 aa)) form the RNase III domain. Glu41 is a binding site for Mg(2+). Asp45 is an active-site residue. Asp114 and Glu117 together coordinate Mg(2+). Residue Glu117 is part of the active site. One can recognise a DRBM domain in the interval 155-225 (DPKTRLQEWL…ASHAIDQLDS (71 aa)). A compositionally biased stretch (basic and acidic residues) spans 203–212 (GEGSSRRLAE). A disordered region spans residues 203–227 (GEGSSRRLAEQDAASHAIDQLDSNK).

It belongs to the ribonuclease III family. As to quaternary structure, homodimer. The cofactor is Mg(2+).

Its subcellular location is the cytoplasm. The enzyme catalyses Endonucleolytic cleavage to 5'-phosphomonoester.. Its function is as follows. Digests double-stranded RNA. Involved in the processing of primary rRNA transcript to yield the immediate precursors to the large and small rRNAs (23S and 16S). Processes some mRNAs, and tRNAs when they are encoded in the rRNA operon. Processes pre-crRNA and tracrRNA of type II CRISPR loci if present in the organism. This is Ribonuclease 3 from Xylella fastidiosa (strain 9a5c).